The following is a 242-amino-acid chain: Agamous-like MADS-box protein AGL8 (242 aa).

The region spanning Arg-3 to Tyr-57 is the MADS-box domain. Residues Ser-88–Lys-178 enclose the K-box domain. Residues Glu-89 to Lys-178 adopt a coiled-coil conformation.

As to quaternary structure, homodimer capable of binding to CArG-box sequences. As to expression, vascular tissue of cauline leaves, floral shoot apex and valves of carpels and fruits.

It localises to the nucleus. Functionally, probable transcription factor that promotes early floral meristem identity in synergy with APETALA1 and CAULIFLOWER. Is required subsequently for the transition of an inflorescence meristem into a floral meristem. Seems to be partially redundant to the function of APETALA1 and CAULIFLOWER in the up-regulation of LEAFY. Is also required for normal pattern of cell division, expansion and differentiation during morphogenesis of the silique. Probably not required for fruit elongation but instead is required to prevent ectopic activity of IND. Represses SAUR10 expression in stems and inflorescence branches. This chain is Agamous-like MADS-box protein AGL8 (AGL8), found in Arabidopsis thaliana (Mouse-ear cress).